The following is a 1420-amino-acid chain: DNA-directed RNA polymerase subunit beta'' (1420 aa).

4 residues coordinate Zn(2+): C220, C295, C302, and C305.

Belongs to the RNA polymerase beta' chain family. RpoC2 subfamily. In plastids the minimal PEP RNA polymerase catalytic core is composed of four subunits: alpha, beta, beta', and beta''. When a (nuclear-encoded) sigma factor is associated with the core the holoenzyme is formed, which can initiate transcription. It depends on Zn(2+) as a cofactor.

It localises to the plastid. Its subcellular location is the chloroplast. The catalysed reaction is RNA(n) + a ribonucleoside 5'-triphosphate = RNA(n+1) + diphosphate. Functionally, DNA-dependent RNA polymerase catalyzes the transcription of DNA into RNA using the four ribonucleoside triphosphates as substrates. In Adiantum capillus-veneris (Maidenhair fern), this protein is DNA-directed RNA polymerase subunit beta''.